A 134-amino-acid polypeptide reads, in one-letter code: NADPH-dependent 7-cyano-7-deazaguanine reductase (134 aa).

Cys48 serves as the catalytic Thioimide intermediate. Asp55 (proton donor) is an active-site residue. Residues 70–72 and 89–90 each bind substrate; these read VEL and QE.

It belongs to the GTP cyclohydrolase I family. QueF type 1 subfamily.

The protein resides in the cytoplasm. It carries out the reaction 7-aminomethyl-7-carbaguanine + 2 NADP(+) = 7-cyano-7-deazaguanine + 2 NADPH + 3 H(+). It participates in tRNA modification; tRNA-queuosine biosynthesis. Functionally, catalyzes the NADPH-dependent reduction of 7-cyano-7-deazaguanine (preQ0) to 7-aminomethyl-7-deazaguanine (preQ1). The protein is NADPH-dependent 7-cyano-7-deazaguanine reductase of Caldanaerobacter subterraneus subsp. tengcongensis (strain DSM 15242 / JCM 11007 / NBRC 100824 / MB4) (Thermoanaerobacter tengcongensis).